The following is a 204-amino-acid chain: Thymidylate kinase (204 aa).

11–18 (GLDKSGKT) is an ATP binding site.

This sequence belongs to the thymidylate kinase family.

It catalyses the reaction dTMP + ATP = dTDP + ADP. The protein operates within pyrimidine metabolism; dTTP biosynthesis. This chain is Thymidylate kinase (TMK), found in Rabbitpox virus (strain Utrecht) (RPV).